The chain runs to 354 residues: Probable butyrate kinase (354 aa).

It belongs to the acetokinase family.

It is found in the cytoplasm. It carries out the reaction butanoate + ATP = butanoyl phosphate + ADP. In Phocaeicola vulgatus (strain ATCC 8482 / DSM 1447 / JCM 5826 / CCUG 4940 / NBRC 14291 / NCTC 11154) (Bacteroides vulgatus), this protein is Probable butyrate kinase.